The following is a 388-amino-acid chain: Succinate--CoA ligase [ADP-forming] subunit beta (388 aa).

In terms of domain architecture, ATP-grasp spans 9–244 (KEIFRSMGVA…LEEEDPKEIE (236 aa)). ATP contacts are provided by residues lysine 46, 53-55 (GRG), glutamate 99, cysteine 102, and glutamate 107. Mg(2+) is bound by residues asparagine 199 and aspartate 213. Residues asparagine 264 and 321 to 323 (GIM) contribute to the substrate site.

The protein belongs to the succinate/malate CoA ligase beta subunit family. As to quaternary structure, heterotetramer of two alpha and two beta subunits. Mg(2+) serves as cofactor.

It catalyses the reaction succinate + ATP + CoA = succinyl-CoA + ADP + phosphate. It carries out the reaction GTP + succinate + CoA = succinyl-CoA + GDP + phosphate. It functions in the pathway carbohydrate metabolism; tricarboxylic acid cycle; succinate from succinyl-CoA (ligase route): step 1/1. In terms of biological role, succinyl-CoA synthetase functions in the citric acid cycle (TCA), coupling the hydrolysis of succinyl-CoA to the synthesis of either ATP or GTP and thus represents the only step of substrate-level phosphorylation in the TCA. The beta subunit provides nucleotide specificity of the enzyme and binds the substrate succinate, while the binding sites for coenzyme A and phosphate are found in the alpha subunit. The polypeptide is Succinate--CoA ligase [ADP-forming] subunit beta (Staphylococcus haemolyticus (strain JCSC1435)).